A 590-amino-acid polypeptide reads, in one-letter code: UvrABC system protein C (590 aa).

The 78-residue stretch at 14–91 (EQPGCYLMKD…IKKHDPKYNV (78 aa)) folds into the GIY-YIG domain. Positions 196–231 (EDVKRELAEKMHEAAETLEFERAKEYRDQIAAIEMT) constitute a UVR domain.

This sequence belongs to the UvrC family. In terms of assembly, interacts with UvrB in an incision complex.

Its subcellular location is the cytoplasm. Its function is as follows. The UvrABC repair system catalyzes the recognition and processing of DNA lesions. UvrC both incises the 5' and 3' sides of the lesion. The N-terminal half is responsible for the 3' incision and the C-terminal half is responsible for the 5' incision. The chain is UvrABC system protein C from Geobacillus kaustophilus (strain HTA426).